Reading from the N-terminus, the 419-residue chain is MAPK/MAK/MRK overlapping kinase (419 aa).

Residues 4 to 285 enclose the Protein kinase domain; that stretch reads YKAIGKIGEG…AHQALQHPYF (282 aa). ATP contacts are provided by residues 10-18 and Lys-33; that span reads IGEGTFSEV. The active-site Proton acceptor is the Asp-128. Disordered regions lie at residues 285 to 344 and 390 to 419; these read FQEQ…RGPA and PASKKTDPQKDLKPAPQQCRLPTIVRKGGR. Composition is skewed to basic and acidic residues over residues 322-338 and 393-402; these read KEGRKQKQSLKQEEDRP and KKTDPQKDLK.

This sequence belongs to the protein kinase superfamily. CMGC Ser/Thr protein kinase family. CDC2/CDKX subfamily. It depends on Mg(2+) as a cofactor. In terms of processing, autophosphorylated. As to expression, expressed in heart, brain, lung, kidney, and pancreas, and at very low levels in placenta, liver and skeletal muscle. Detected in retina.

The protein localises to the cytoplasm. It localises to the cell projection. Its subcellular location is the cilium. The protein resides in the nucleus. The enzyme catalyses L-seryl-[protein] + ATP = O-phospho-L-seryl-[protein] + ADP + H(+). It catalyses the reaction L-threonyl-[protein] + ATP = O-phospho-L-threonyl-[protein] + ADP + H(+). With respect to regulation, phosphorylation appears to increase the enzymatic activity. Able to phosphorylate several exogenous substrates and to undergo autophosphorylation. Negatively regulates cilium length in a cAMP and mTORC1 signaling-dependent manner. The sequence is that of MAPK/MAK/MRK overlapping kinase (MOK) from Homo sapiens (Human).